The following is a 218-amino-acid chain: Capsid protein (218 aa).

At M1 the chain carries N-acetylmethionine; by host. Positions 1–31 are disordered; that stretch reads MDKSGSPNASRTSRRRRPRRGSRSASGADAG. The segment covering 12-22 has biased composition (basic residues); sequence TSRRRRPRRGS.

The protein belongs to the cucumovirus capsid protein family.

The protein localises to the virion. Its function is as follows. Capsid protein. Probably binds RNA and plays a role in packaging. The chain is Capsid protein from Cucumber mosaic virus (strain Trk7) (CMV).